The sequence spans 69 residues: uncharacterized protein (69 aa).

The chain crosses the membrane as a helical span at residues 32-54; sequence MLGAIDVAVAVASVPTLFVVTAI.

The protein resides in the membrane. This is an uncharacterized protein from Sinorhizobium fredii (strain NBRC 101917 / NGR234).